Here is a 328-residue protein sequence, read N- to C-terminus: NADH-quinone oxidoreductase subunit H (328 aa).

8 helical membrane-spanning segments follow: residues 8-28 (VAAIAFALFQAVVILLAAVGA), 81-101 (GLFVLAPAIAMASLLLSFMVI), 114-134 (IGLLFFFAMAGINVYAVLFAG), 154-174 (LSYEVFMGLSLMGVVAMAGSF), 186-206 (LWFIVPQFFGFCTFLVAGIAV), 237-257 (FFVGEYVGIVLVSALMVTLFL), 265-285 (LPPIVWFLLKTAVFVGFFILL), and 304-324 (VCLPLTLINLLVTGALILIFS).

Belongs to the complex I subunit 1 family. In terms of assembly, NDH-1 is composed of 14 different subunits. Subunits NuoA, H, J, K, L, M, N constitute the membrane sector of the complex.

It localises to the cell inner membrane. It carries out the reaction a quinone + NADH + 5 H(+)(in) = a quinol + NAD(+) + 4 H(+)(out). Its function is as follows. NDH-1 shuttles electrons from NADH, via FMN and iron-sulfur (Fe-S) centers, to quinones in the respiratory chain. The immediate electron acceptor for the enzyme in this species is believed to be ubiquinone. Couples the redox reaction to proton translocation (for every two electrons transferred, four hydrogen ions are translocated across the cytoplasmic membrane), and thus conserves the redox energy in a proton gradient. This subunit may bind ubiquinone. In Chromohalobacter salexigens (strain ATCC BAA-138 / DSM 3043 / CIP 106854 / NCIMB 13768 / 1H11), this protein is NADH-quinone oxidoreductase subunit H.